We begin with the raw amino-acid sequence, 308 residues long: Coenzyme PQQ synthesis protein B (308 aa).

Belongs to the PqqB family.

It functions in the pathway cofactor biosynthesis; pyrroloquinoline quinone biosynthesis. Functionally, may be involved in the transport of PQQ or its precursor to the periplasm. In Klebsiella pneumoniae (strain 342), this protein is Coenzyme PQQ synthesis protein B.